The primary structure comprises 236 residues: Biosynthetic peptidoglycan transglycosylase (236 aa).

A helical membrane pass occupies residues 12–31 (ALLWFAAGSVLVVLVLRWVP).

Belongs to the glycosyltransferase 51 family.

Its subcellular location is the cell inner membrane. The enzyme catalyses [GlcNAc-(1-&gt;4)-Mur2Ac(oyl-L-Ala-gamma-D-Glu-L-Lys-D-Ala-D-Ala)](n)-di-trans,octa-cis-undecaprenyl diphosphate + beta-D-GlcNAc-(1-&gt;4)-Mur2Ac(oyl-L-Ala-gamma-D-Glu-L-Lys-D-Ala-D-Ala)-di-trans,octa-cis-undecaprenyl diphosphate = [GlcNAc-(1-&gt;4)-Mur2Ac(oyl-L-Ala-gamma-D-Glu-L-Lys-D-Ala-D-Ala)](n+1)-di-trans,octa-cis-undecaprenyl diphosphate + di-trans,octa-cis-undecaprenyl diphosphate + H(+). It participates in cell wall biogenesis; peptidoglycan biosynthesis. Functionally, peptidoglycan polymerase that catalyzes glycan chain elongation from lipid-linked precursors. This chain is Biosynthetic peptidoglycan transglycosylase, found in Pseudomonas syringae pv. syringae (strain B728a).